Here is a 619-residue protein sequence, read N- to C-terminus: Mitochondrial Rho GTPase 1-A (619 aa).

The Cytoplasmic portion of the chain corresponds to 1–593 (MRKDVRILLV…TQADLKNSTF (593 aa)). In terms of domain architecture, Miro 1 spans 2–168 (RKDVRILLVG…FYYAQKAVLH (167 aa)). GTP-binding residues include lysine 14, glycine 16, lysine 17, threonine 18, and serine 19. Threonine 18 is a binding site for Mg(2+). The Mg(2+) site is built by proline 35 and aspartate 57. The GTP site is built by serine 59, asparagine 118, lysine 119, aspartate 121, alanine 149, and lysine 150. EF-hand domains follow at residues 184-219 (SCIKALTRIFKISDLDNDGILNDNELNFFQRTCFNI) and 304-339 (NAYLFLQSVFDKHDKDRDCALSPDELKDLFKVFPYM). The Ca(2+) site is built by aspartate 197, aspartate 199, aspartate 201, glutamate 208, aspartate 317, aspartate 319, aspartate 321, alanine 323, and glutamate 328. The Miro 2 domain occupies 416–580 (RSVFRCNVLG…YTKLTTMAMY (165 aa)). GTP-binding residues include arginine 427, cysteine 429, glycine 430, lysine 431, serine 432, glycine 433, lysine 447, lysine 529, aspartate 531, threonine 559, and cysteine 560. Arginine 427 lines the Mg(2+) pocket. A helical; Anchor for type IV membrane protein transmembrane segment spans residues 594 to 616 (WLRASVGATVFAVLGFAMYKALL). Over 617-619 (KQR) the chain is Mitochondrial intermembrane.

This sequence belongs to the mitochondrial Rho GTPase family. As to quaternary structure, homodimer.

It is found in the mitochondrion outer membrane. It carries out the reaction GTP + H2O = GDP + phosphate + H(+). It catalyses the reaction ATP + H2O = ADP + phosphate + H(+). The catalysed reaction is UTP + H2O = UDP + phosphate + H(+). Its function is as follows. Atypical mitochondrial nucleoside-triphosphatase (NTPase) involved in mitochondrial trafficking. Probably involved in control of anterograde transport of mitochondria and their subcellular distribution. Can hydrolyze GTP, ATP and UTP. This chain is Mitochondrial Rho GTPase 1-A (rhot1a), found in Danio rerio (Zebrafish).